The primary structure comprises 149 residues: Squidulin (149 aa).

An N-acetylalanine modification is found at Ala1. EF-hand domains lie at Lys7–Thr42, Pro43–Pro78, Asp80–Glu115, and Leu117–Lys149. 19 residues coordinate Ca(2+): Asp20, Asp22, Asp24, Gln26, Glu31, Asp56, Asp58, Asn60, Thr62, Glu67, Asp93, Asp95, Asn97, Glu104, Asp130, Asp132, Asp134, Met136, and Glu141.

The protein belongs to the calmodulin family.

Functionally, not known. This protein has four functional calcium-binding sites. This chain is Squidulin, found in Doryteuthis pealeii (Longfin inshore squid).